A 253-amino-acid chain; its full sequence is 5-oxoprolinase subunit A (253 aa).

The protein belongs to the LamB/PxpA family. In terms of assembly, forms a complex composed of PxpA, PxpB and PxpC.

It carries out the reaction 5-oxo-L-proline + ATP + 2 H2O = L-glutamate + ADP + phosphate + H(+). Catalyzes the cleavage of 5-oxoproline to form L-glutamate coupled to the hydrolysis of ATP to ADP and inorganic phosphate. This is 5-oxoprolinase subunit A from Bacillus cereus (strain ATCC 14579 / DSM 31 / CCUG 7414 / JCM 2152 / NBRC 15305 / NCIMB 9373 / NCTC 2599 / NRRL B-3711).